The following is a 405-amino-acid chain: mRNA cap guanine-N(7) methyltransferase (405 aa).

The interval 1-78 (MDNILNPEDN…PRLEEGHGSL (78 aa)) is disordered. Polar residues-rich tracts occupy residues 9-18 (DNVSQTNTET) and 36-45 (KFTASGQNLD). Basic and acidic residues predominate over residues 58–75 (KAGEPESPSKRPRLEEGH). The mRNA cap 0 methyltransferase domain maps to 97–404 (SRIFHLRNFN…IYLLFAFEKQ (308 aa)). 106–107 (NN) lines the mRNA pocket. 6 residues coordinate S-adenosyl-L-methionine: lysine 110, glycine 134, aspartate 156, aspartate 190, glutamine 213, and tyrosine 218.

This sequence belongs to the class I-like SAM-binding methyltransferase superfamily. mRNA cap 0 methyltransferase family.

It is found in the nucleus. It carries out the reaction a 5'-end (5'-triphosphoguanosine)-ribonucleoside in mRNA + S-adenosyl-L-methionine = a 5'-end (N(7)-methyl 5'-triphosphoguanosine)-ribonucleoside in mRNA + S-adenosyl-L-homocysteine. In terms of biological role, catalytic subunit of the mRNA-capping methyltransferase RNMT:RAMAC complex that methylates the N7 position of the added guanosine to the 5'-cap structure of mRNAs. Binds RNA containing 5'-terminal GpppC. In Xenopus tropicalis (Western clawed frog), this protein is mRNA cap guanine-N(7) methyltransferase (rnmt).